A 211-amino-acid chain; its full sequence is Large ribosomal subunit protein uL4 (211 aa).

Residues 46–55 show a composition bias toward polar residues; it reads GNHATKTRSM. The disordered stretch occupies residues 46-89; sequence GNHATKTRSMVSGGGKKPWSQKGTGRARQGSTRAPHWVGGGTVH.

The protein belongs to the universal ribosomal protein uL4 family. Part of the 50S ribosomal subunit.

In terms of biological role, one of the primary rRNA binding proteins, this protein initially binds near the 5'-end of the 23S rRNA. It is important during the early stages of 50S assembly. It makes multiple contacts with different domains of the 23S rRNA in the assembled 50S subunit and ribosome. Forms part of the polypeptide exit tunnel. The chain is Large ribosomal subunit protein uL4 from Leptospira interrogans serogroup Icterohaemorrhagiae serovar copenhageni (strain Fiocruz L1-130).